Here is a 376-residue protein sequence, read N- to C-terminus: Putative glutamate--cysteine ligase 2-1 (376 aa).

It belongs to the glutamate--cysteine ligase type 2 family. YbdK subfamily.

It catalyses the reaction L-cysteine + L-glutamate + ATP = gamma-L-glutamyl-L-cysteine + ADP + phosphate + H(+). ATP-dependent carboxylate-amine ligase which exhibits weak glutamate--cysteine ligase activity. This Mycobacterium sp. (strain KMS) protein is Putative glutamate--cysteine ligase 2-1.